Consider the following 507-residue polypeptide: Glutamate--tRNA ligase (507 aa).

The short motif at 14–24 (PSPTGYLHIGG) is the 'HIGH' region element. A 'KMSKS' region motif is present at residues 261–265 (KLSKR). Lysine 264 is an ATP binding site.

This sequence belongs to the class-I aminoacyl-tRNA synthetase family. Glutamate--tRNA ligase type 1 subfamily. Monomer.

It localises to the cytoplasm. It catalyses the reaction tRNA(Glu) + L-glutamate + ATP = L-glutamyl-tRNA(Glu) + AMP + diphosphate. Its function is as follows. Catalyzes the attachment of glutamate to tRNA(Glu) in a two-step reaction: glutamate is first activated by ATP to form Glu-AMP and then transferred to the acceptor end of tRNA(Glu). This Roseiflexus castenholzii (strain DSM 13941 / HLO8) protein is Glutamate--tRNA ligase.